The primary structure comprises 567 residues: Phenylalanine ammonia-lyase (567 aa).

Residue Tyr78 is the Proton donor/acceptor of the active site. Residues 167 to 169 constitute a cross-link (5-imidazolinone (Ala-Gly)); it reads ASG. At Ser168 the chain carries 2,3-didehydroalanine (Ser). Positions 223, 311, 317, 347, 419, 448, and 451 each coordinate (E)-cinnamate.

This sequence belongs to the PAL/histidase family. Homotetramer. Contains an active site 4-methylidene-imidazol-5-one (MIO), which is formed autocatalytically by cyclization and dehydration of residues Ala-Ser-Gly.

It localises to the cytoplasm. The enzyme catalyses L-phenylalanine = (E)-cinnamate + NH4(+). Its pathway is phenylpropanoid metabolism; trans-cinnamate biosynthesis; trans-cinnamate from L-phenylalanine: step 1/1. Catalyzes the non-oxidative deamination of L-phenylalanine to form trans-cinnamic acid, the first step in the phenylpropanoid pathway. The protein is Phenylalanine ammonia-lyase of Trichormus variabilis (strain ATCC 29413 / PCC 7937) (Anabaena variabilis).